The sequence spans 117 residues: Virion membrane protein A21 (117 aa).

The chain crosses the membrane as a helical; Signal-anchor for type III membrane protein span at residues 1 to 21 (MITLFLILCYFILIFNIIVPA). Residues 22–117 (ISEKMRRERA…RAYSDLFFTT (96 aa)) lie on the Virion surface side of the membrane.

This sequence belongs to the chordopoxvirinae A21 family. As to quaternary structure, envelope protein part of a stable entry-fusion complex (EFC) which is at least composed of proteins A16, A21, A28, G3, G9, H2, J5, and L5. Formation of the viral membrane is necessary for the assembly of the complex. In terms of processing, contains two intramolecular disulfide bonds. They are created by the viral disulfide bond formation pathway, a poxvirus-specific pathway that operates on the cytoplasmic side of the MV membranes.

It localises to the virion membrane. Its function is as follows. Envelope protein part of the entry-fusion complex responsible for the virus membrane fusion with host cell membrane during virus entry. The protein is Virion membrane protein A21 of Vaccinia virus (strain Ankara) (VACV).